The following is a 697-amino-acid chain: MAR-binding filament-like protein 1 (697 aa).

The N-terminal 41 residues, 1–41, are a transit peptide targeting the chloroplast; it reads MATSCFPPFSASSSSLCSSQFTPLLSCPRNTQICRKKRPVM. A thylakoid-targeting transit peptide spans 42–79; sequence ASMHSENQKESNVCNRRSILFVGFSVLPLLNLRARALE. Residues 80–106 are Lumenal, thylakoid-facing; it reads GLSTDSQAQPQKEETEQTIQGSAGNPF. Residues 81 to 100 are disordered; the sequence is LSTDSQAQPQKEETEQTIQG. The chain crosses the membrane as a helical span at residues 107–127; it reads VSLLNGLGVVGSGVLGSLYAL. The Stromal segment spans residues 128–697; that stretch reads ARNEKAVSDA…GEKEKVNVQQ (570 aa). Positions 203-671 form a coiled coil; the sequence is LQNEKKLAED…KGEILRLRSQ (469 aa). The interval 599–629 is disordered; sequence TSRNSSLEDEREVHRQSVSEQKQISQEAQEN. The span at 604 to 615 shows a compositional bias: basic and acidic residues; sequence SLEDEREVHRQS. Residues 616 to 627 show a composition bias toward polar residues; the sequence is VSEQKQISQEAQ.

In terms of assembly, interacts with MAF1. Interacts with PTST2; the interaction is essential for the initiation of starch granules biosynthesis in leaf chloroplasts, for the correct location of the process in the stromal spaces between the thylakoid membranes, and for the association of PTST2 with the thylakoid membranes. In terms of processing, phosphorylated in vitro by human casein kinase II. Post-translationally, predicted to be translocated into the thylakoid by the Tat system.

The protein localises to the plastid. It localises to the chloroplast. Its subcellular location is the chloroplast thylakoid membrane. It is found in the chloroplast stroma. The protein resides in the chloroplast nucleoid. The protein localises to the nucleus. It localises to the nucleus matrix. Its function is as follows. Required for the initiation of starch granules biosynthesis in leaf chloroplasts. Anchored to the thylakoid membranes with its C-terminus facing into the stroma where it is essential for localizing PTST2 and SS4 to the stromal spaces between the thylakoid membranes in order to begin starch granule formation. Associated with leaf chloroplastic nucleoids in vivo. Binds to various chloroplastic double-stranded DNA fragments without particular sequence specificity in vitro. May function at the interface between nucleoids and thylakoids possibly by anchoring nucleoids to the thylakoid membrane system in mature chloroplasts. Binds nuclear DNA. Interacts with chromatin via matrix attachment regions (MARs). Likely to participate in nuclear architecture by connecting chromatin with the nuclear matrix and potentially with the nuclear envelope. This chain is MAR-binding filament-like protein 1, found in Solanum lycopersicum (Tomato).